Reading from the N-terminus, the 355-residue chain is UDP-N-acetylglucosamine--N-acetylmuramyl-(pentapeptide) pyrophosphoryl-undecaprenol N-acetylglucosamine transferase (355 aa).

Residues 15–17, Asn127, Arg163, Ser191, Ile244, 263–268, and Gln288 each bind UDP-N-acetyl-alpha-D-glucosamine; these read TGG and ALTVSE.

The protein belongs to the glycosyltransferase 28 family. MurG subfamily.

The protein resides in the cell inner membrane. The catalysed reaction is di-trans,octa-cis-undecaprenyl diphospho-N-acetyl-alpha-D-muramoyl-L-alanyl-D-glutamyl-meso-2,6-diaminopimeloyl-D-alanyl-D-alanine + UDP-N-acetyl-alpha-D-glucosamine = di-trans,octa-cis-undecaprenyl diphospho-[N-acetyl-alpha-D-glucosaminyl-(1-&gt;4)]-N-acetyl-alpha-D-muramoyl-L-alanyl-D-glutamyl-meso-2,6-diaminopimeloyl-D-alanyl-D-alanine + UDP + H(+). It participates in cell wall biogenesis; peptidoglycan biosynthesis. In terms of biological role, cell wall formation. Catalyzes the transfer of a GlcNAc subunit on undecaprenyl-pyrophosphoryl-MurNAc-pentapeptide (lipid intermediate I) to form undecaprenyl-pyrophosphoryl-MurNAc-(pentapeptide)GlcNAc (lipid intermediate II). In Salmonella choleraesuis (strain SC-B67), this protein is UDP-N-acetylglucosamine--N-acetylmuramyl-(pentapeptide) pyrophosphoryl-undecaprenol N-acetylglucosamine transferase.